The chain runs to 597 residues: Cytosolic Fe-S cluster assembly factor nar1 (597 aa).

[4Fe-4S] cluster-binding residues include Cys-20, Cys-61, Cys-64, Cys-67, Cys-209, and Cys-264. A disordered region spans residues 419–447 (PARASRLPGARQSATSAGGSRRQLASRNA). Residues 430–447 (QSATSAGGSRRQLASRNA) are compositionally biased toward polar residues. The [4Fe-4S] cluster site is built by Cys-464 and Cys-468. The tract at residues 482-504 (EAASNMSVESQTEPPEAALKPTP) is disordered. Residues 485–494 (SNMSVESQTE) show a composition bias toward polar residues.

The protein belongs to the NARF family.

Its function is as follows. Component of the cytosolic Fe/S protein assembly machinery. Required for maturation of extramitochondrial Fe/S proteins. May play a role in the transfer of pre-assembled Fe/S clusters to target apoproteins. The polypeptide is Cytosolic Fe-S cluster assembly factor nar1 (nar1) (Aspergillus clavatus (strain ATCC 1007 / CBS 513.65 / DSM 816 / NCTC 3887 / NRRL 1 / QM 1276 / 107)).